The following is a 364-amino-acid chain: Chorismate synthase (364 aa).

An NADP(+)-binding site is contributed by Arg48. Residues 125–127, 237–238, Gly277, 292–296, and Arg318 contribute to the FMN site; these read RSS, NA, and KPTSS.

The protein belongs to the chorismate synthase family. Homotetramer. FMNH2 is required as a cofactor.

It catalyses the reaction 5-O-(1-carboxyvinyl)-3-phosphoshikimate = chorismate + phosphate. Its pathway is metabolic intermediate biosynthesis; chorismate biosynthesis; chorismate from D-erythrose 4-phosphate and phosphoenolpyruvate: step 7/7. In terms of biological role, catalyzes the anti-1,4-elimination of the C-3 phosphate and the C-6 proR hydrogen from 5-enolpyruvylshikimate-3-phosphate (EPSP) to yield chorismate, which is the branch point compound that serves as the starting substrate for the three terminal pathways of aromatic amino acid biosynthesis. This reaction introduces a second double bond into the aromatic ring system. The polypeptide is Chorismate synthase (Albidiferax ferrireducens (strain ATCC BAA-621 / DSM 15236 / T118) (Rhodoferax ferrireducens)).